The primary structure comprises 305 residues: Ribonuclease HIII (305 aa).

In terms of domain architecture, RNase H type-2 spans 91–305 (WSVIGSDEVG…ANTQKAQKLL (215 aa)). Residues aspartate 97, glutamate 98, and aspartate 201 each contribute to the a divalent metal cation site.

This sequence belongs to the RNase HII family. RnhC subfamily. Mn(2+) is required as a cofactor. It depends on Mg(2+) as a cofactor.

Its subcellular location is the cytoplasm. It catalyses the reaction Endonucleolytic cleavage to 5'-phosphomonoester.. Its function is as follows. Endonuclease that specifically degrades the RNA of RNA-DNA hybrids. This chain is Ribonuclease HIII, found in Enterococcus faecalis (strain ATCC 700802 / V583).